A 324-amino-acid chain; its full sequence is Acetyl-coenzyme A carboxylase carboxyl transferase subunit alpha (324 aa).

Residues Ile37–Gln291 form the CoA carboxyltransferase C-terminal domain.

This sequence belongs to the AccA family. As to quaternary structure, acetyl-CoA carboxylase is a heterohexamer composed of biotin carboxyl carrier protein (AccB), biotin carboxylase (AccC) and two subunits each of ACCase subunit alpha (AccA) and ACCase subunit beta (AccD).

It localises to the cytoplasm. The catalysed reaction is N(6)-carboxybiotinyl-L-lysyl-[protein] + acetyl-CoA = N(6)-biotinyl-L-lysyl-[protein] + malonyl-CoA. The protein operates within lipid metabolism; malonyl-CoA biosynthesis; malonyl-CoA from acetyl-CoA: step 1/1. Component of the acetyl coenzyme A carboxylase (ACC) complex. First, biotin carboxylase catalyzes the carboxylation of biotin on its carrier protein (BCCP) and then the CO(2) group is transferred by the carboxyltransferase to acetyl-CoA to form malonyl-CoA. This is Acetyl-coenzyme A carboxylase carboxyl transferase subunit alpha from Bacillus cereus (strain B4264).